Reading from the N-terminus, the 166-residue chain is Ribonuclease H (166 aa).

An RNase H type-1 domain is found at 5–147; it reads PRKRVALFTD…VDREARRQAQ (143 aa). Mg(2+) is bound by residues Asp14, Glu52, Asp74, and Asp139. Residues 128–166 are disordered; sequence GHTGHPENERVDREARRQAQSQAKTPCPPRAPTLFHEEA. The segment covering 131–144 has biased composition (basic and acidic residues); it reads GHPENERVDREARR.

It belongs to the RNase H family. Monomer. Mg(2+) serves as cofactor.

The catalysed reaction is Endonucleolytic cleavage to 5'-phosphomonoester.. Its function is as follows. Endonuclease that specifically degrades the RNA of RNA-DNA hybrids. In Thermus thermophilus (strain ATCC 27634 / DSM 579 / HB8), this protein is Ribonuclease H (rnhA).